The following is a 323-amino-acid chain: MKPENKIPVLTRLSDEMTAVVNFQQPGLPPWPADGDIETQRQYYLLERRFWNADAPSMTTRTCAVPTPYGDVTTRLYSPQPTSQAILYYLHGGGFILGNLDTHDRIMRLLARYTGCTVIGIDYSLSPQARYPQAIEETVAVCSYFSQHADEYSLNVEKIGFAGDSAGAMLALASALWLRDKHIRCGNVIAILLWYGLYGLQDSVSRRLFGGAWDGLTREDLDMYEKAYLRNEDDRESPWYCLFNNDLTRDVPPCFIASAEFDPLIDDSRLLHQTLQAHQQPCEYKMYPGTLHAFLHYSRMMTIADDALQDGARFFMARMKTPR.

An Involved in the stabilization of the negatively charged intermediate by the formation of the oxyanion hole motif is present at residues 91–93 (HGG). Active-site residues include Ser-165, Asp-262, and His-292.

The protein belongs to the 'GDXG' lipolytic enzyme family. Homodimer. Interacts with MalT and MelA.

It localises to the cytoplasm. Its function is as follows. Displays esterase activity towards short chain fatty esters (acyl chain length of up to 8 carbons). Able to hydrolyze triacetylglycerol (triacetin) and tributyrylglycerol (tributyrin), but not trioleylglycerol (triolein) or cholesterol oleate. Negatively regulates MalT activity by antagonizing maltotriose binding. Inhibits MelA galactosidase activity. This chain is Acetyl esterase, found in Salmonella schwarzengrund (strain CVM19633).